A 645-amino-acid polypeptide reads, in one-letter code: Lipase 1 (645 aa).

The signal sequence occupies residues 1 to 24; it reads MKRSFIFAPGMLALSISAISNAHA. S34 (nucleophile) is an active-site residue. Active-site residues include D327 and H330. The 263-residue stretch at 383–645 folds into the Autotransporter domain; the sequence is NEQGKLGVFG…SFSLGVNASF (263 aa).

This sequence belongs to the 'GDSL' lipolytic enzyme family.

It localises to the secreted. The catalysed reaction is a triacylglycerol + H2O = a diacylglycerol + a fatty acid + H(+). In Photorhabdus luminescens (Xenorhabdus luminescens), this protein is Lipase 1 (lip-1).